The following is a 461-amino-acid chain: Alpha-tubulin N-acetyltransferase 1 (461 aa).

Positions 2-189 (VEFRFDIKPL…NNFVLYEGFF (188 aa)) constitute an N-acetyltransferase domain. Acetyl-CoA contacts are provided by residues 123–136 (FYVH…GLGK) and 159–168 (SEKLLSFLSK). Disordered stretches follow at residues 196-295 (NGGG…GNHD), 314-362 (NSYE…PEVA), and 418-443 (RPPG…SGGG). Over residues 233 to 254 (RRGSQQQTTPNARLQQITQISP) the composition is skewed to polar residues. The segment covering 283-293 (GSAEANSGNGN) has biased composition (low complexity). Residues 318-336 (PEPEVEPEPEPEPEPEPEP) show a composition bias toward acidic residues. Pro residues predominate over residues 339 to 356 (ITPPSPPPKSHTPTPPSV). Positions 426-439 (SPGQDNTDAMSTVS) are enriched in polar residues.

This sequence belongs to the acetyltransferase ATAT1 family.

It carries out the reaction L-lysyl-[alpha-tubulin] + acetyl-CoA = N(6)-acetyl-L-lysyl-[alpha-tubulin] + CoA + H(+). Its function is as follows. Specifically acetylates 'Lys-40' in alpha-tubulin on the lumenal side of microtubules. Promotes microtubule destabilization and accelerates microtubule dynamics; this activity may be independent of acetylation activity. Acetylates alpha-tubulin with a slow enzymatic rate, due to a catalytic site that is not optimized for acetyl transfer. Enters the microtubule through each end and diffuses quickly throughout the lumen of microtubules. Acetylates only long/old microtubules because of its slow acetylation rate since it does not have time to act on dynamically unstable microtubules before the enzyme is released. Acetylates central spindle microtubules. The sequence is that of Alpha-tubulin N-acetyltransferase 1 from Drosophila melanogaster (Fruit fly).